The chain runs to 699 residues: eEF1A lysine and N-terminal methyltransferase (699 aa).

Position 1 is an N-acetylmethionine (M1). Residue S267 is modified to Phosphoserine. Positions 433-460 (VSHRAQKKRKKDRKKHRPADTPEDLPAA) are disordered. Residues 436 to 449 (RAQKKRKKDRKKHR) show a composition bias toward basic residues.

This sequence belongs to the methyltransferase superfamily. As to quaternary structure, forms a tripartite complex containing GAB1, METTL13 and SPRY2. Within the complex interacts with GAB1 and SPRY2.

The protein resides in the cytoplasm. Its subcellular location is the nucleus. It is found in the mitochondrion. It catalyses the reaction L-lysyl-[protein] + S-adenosyl-L-methionine = N(6)-methyl-L-lysyl-[protein] + S-adenosyl-L-homocysteine + H(+). It carries out the reaction N(6)-methyl-L-lysyl-[protein] + S-adenosyl-L-methionine = N(6),N(6)-dimethyl-L-lysyl-[protein] + S-adenosyl-L-homocysteine + H(+). The enzyme catalyses N-terminal glycyl-L-lysyl-L-glutamyl-[protein] + 3 S-adenosyl-L-methionine = N-terminal N,N,N-trimethyl-glycyl-L-lysyl-L-glutamyl-[protein] + 3 S-adenosyl-L-homocysteine + 3 H(+). In terms of biological role, dual methyltransferase that catalyzes methylation of elongation factor 1-alpha (EEF1A1 and EEF1A2) at two different positions, and is therefore involved in the regulation of mRNA translation. Via its C-terminus, methylates EEF1A1 and EEF1A2 at the N-terminal residue 'Gly-2'. Via its N-terminus dimethylates EEF1A1 and EEF1A2 at residue 'Lys-55'. Has no activity towards core histones H2A, H2B, H3 and H4. The sequence is that of eEF1A lysine and N-terminal methyltransferase (METTL13) from Bos taurus (Bovine).